The following is a 339-amino-acid chain: Phomopsene synthase (339 aa).

Residues Asp89, Asp94, Asn224, Ser228, and Glu232 each coordinate Mg(2+).

It belongs to the terpene synthase family. Mg(2+) serves as cofactor.

The catalysed reaction is (2E,6E,10E)-geranylgeranyl diphosphate = phomopsene + diphosphate. It carries out the reaction (2E,6E,10E)-geranylgeranyl diphosphate = allokutznerene + diphosphate. It participates in secondary metabolite biosynthesis; terpenoid biosynthesis. Its function is as follows. Diterpene synthase that catalyzes the conversion of geranylgeranyl diphosphate (GGPP) to phomopsene, a diterpene previously reported from the fungus P.amygdali. Phomopsene is the main product, but the enzyme can also produce allokutznerene (about 50% of phomopsene production activity) and traces of spiroviolene. Cannot use geranyl diphosphate (GPP), farnesyl diphosphate (FPP) and geranylfarnesyl diphosphate (GFPP). The chain is Phomopsene synthase from Allokutzneria albata (Kibdelosporangium albatum).